The chain runs to 233 residues: Large ribosomal subunit protein uL1 (233 aa).

The protein belongs to the universal ribosomal protein uL1 family. As to quaternary structure, part of the 50S ribosomal subunit.

In terms of biological role, binds directly to 23S rRNA. The L1 stalk is quite mobile in the ribosome, and is involved in E site tRNA release. Functionally, protein L1 is also a translational repressor protein, it controls the translation of the L11 operon by binding to its mRNA. This is Large ribosomal subunit protein uL1 from Shewanella sp. (strain ANA-3).